The sequence spans 630 residues: 1-deoxy-D-xylulose-5-phosphate synthase (630 aa).

Residues H73 and 114–116 (SHA) each bind thiamine diphosphate. Mg(2+) is bound at residue D146. Residues 147-148 (GA), N176, F287, and E371 each bind thiamine diphosphate. A Mg(2+)-binding site is contributed by N176.

This sequence belongs to the transketolase family. DXPS subfamily. Homodimer. Mg(2+) serves as cofactor. Thiamine diphosphate is required as a cofactor.

It catalyses the reaction D-glyceraldehyde 3-phosphate + pyruvate + H(+) = 1-deoxy-D-xylulose 5-phosphate + CO2. The protein operates within metabolic intermediate biosynthesis; 1-deoxy-D-xylulose 5-phosphate biosynthesis; 1-deoxy-D-xylulose 5-phosphate from D-glyceraldehyde 3-phosphate and pyruvate: step 1/1. Catalyzes the acyloin condensation reaction between C atoms 2 and 3 of pyruvate and glyceraldehyde 3-phosphate to yield 1-deoxy-D-xylulose-5-phosphate (DXP). The protein is 1-deoxy-D-xylulose-5-phosphate synthase of Corynebacterium jeikeium (strain K411).